We begin with the raw amino-acid sequence, 255 residues long: uncharacterized protein (255 aa).

N-linked (GlcNAc...) asparagine; by host glycans are attached at residues Asn-16 and Asn-58. 2 helical membrane passes run 72 to 92 (LIYS…TIYY) and 104 to 124 (LWYI…SHIC).

It localises to the membrane. This is an uncharacterized protein from Acanthamoeba polyphaga (Amoeba).